A 341-amino-acid chain; its full sequence is Peroxisomal membrane protein PEX14 (341 aa).

N-acetylserine is present on S2. An SH3-binding motif is present at residues 86–94 (PPTLPHRDW). Residues 276 to 341 (MQEESDKEKE…QNGQVEDSIP (66 aa)) are disordered. Basic and acidic residues predominate over residues 279 to 295 (ESDKEKENGSDANKDDN). A compositionally biased stretch (polar residues) spans 308–341 (IDSNASIPEWQKNTAANEISVPDWQNGQVEDSIP). At S313 the chain carries Phosphoserine.

This sequence belongs to the peroxin-14 family. In terms of assembly, interacts with PEX13 (via SH3 domain); forming the PEX13-PEX14 docking complex. Interacts with PEX5 (via WxxxF/Y motifs). Interacts with PEX7. Interacts with PEX9.

The protein localises to the peroxisome membrane. Functionally, component of the PEX13-PEX14 docking complex, a translocon channel that specifically mediates the import of peroxisomal cargo proteins bound to PEX5 or PEX21 receptors. The PEX13-PEX14 docking complex forms a large import pore which can be opened to a diameter of about 9 nm. Mechanistically, PEX5 (or PEX21) receptor along with cargo proteins associates with the PEX14 subunit of the PEX13-PEX14 docking complex in the cytosol, leading to the insertion of the receptor into the organelle membrane with the concomitant translocation of the cargo into the peroxisome matrix. This chain is Peroxisomal membrane protein PEX14, found in Saccharomyces cerevisiae (strain ATCC 204508 / S288c) (Baker's yeast).